The following is a 145-amino-acid chain: Bacilliredoxin SAR1441 (145 aa).

This sequence belongs to the bacilliredoxin family.

The sequence is that of Bacilliredoxin SAR1441 from Staphylococcus aureus (strain MRSA252).